The sequence spans 642 residues: Kinesin-like protein KIN-7L (642 aa).

One can recognise a Kinesin motor domain in the interval K3–V337. A compositionally biased stretch (low complexity) spans P12 to T27. The disordered stretch occupies residues P12–W33. Position 94–101 (G94–T101) interacts with ATP. 2 coiled-coil regions span residues V343 to S428 and R540 to A612.

It belongs to the TRAFAC class myosin-kinesin ATPase superfamily. Kinesin family. KIN-7 subfamily.

The chain is Kinesin-like protein KIN-7L from Oryza sativa subsp. japonica (Rice).